We begin with the raw amino-acid sequence, 301 residues long: tRNA pseudouridine synthase B (301 aa).

The active-site Nucleophile is the aspartate 47.

This sequence belongs to the pseudouridine synthase TruB family. Type 1 subfamily.

It catalyses the reaction uridine(55) in tRNA = pseudouridine(55) in tRNA. In terms of biological role, responsible for synthesis of pseudouridine from uracil-55 in the psi GC loop of transfer RNAs. The sequence is that of tRNA pseudouridine synthase B from Cereibacter sphaeroides (strain ATCC 17025 / ATH 2.4.3) (Rhodobacter sphaeroides).